The primary structure comprises 184 residues: Ribosome-recycling factor (184 aa).

The interval 141-165 (DEKNGDITEDDLRSQTDDVQKATDN) is disordered.

This sequence belongs to the RRF family.

It is found in the cytoplasm. Responsible for the release of ribosomes from messenger RNA at the termination of protein biosynthesis. May increase the efficiency of translation by recycling ribosomes from one round of translation to another. This Staphylococcus epidermidis (strain ATCC 35984 / DSM 28319 / BCRC 17069 / CCUG 31568 / BM 3577 / RP62A) protein is Ribosome-recycling factor.